The sequence spans 69 residues: Cytochrome c oxidase subunit 8A, mitochondrial (69 aa).

The transit peptide at 1–25 (MSVLTPLLLRGLTGSARRLPVPRAK) directs the protein to the mitochondrion. The SIFI-degron signature appears at 2-19 (SVLTPLLLRGLTGSARRL). The Mitochondrial matrix portion of the chain corresponds to 26–36 (IHSLPPDEKLG). A helical membrane pass occupies residues 37-60 (IMELAVGLTSCFVTFLLPAGWILS). The Mitochondrial intermembrane segment spans residues 61 to 69 (HLETYRRPE).

It belongs to the cytochrome c oxidase VIII family. As to quaternary structure, component of the cytochrome c oxidase (complex IV, CIV), a multisubunit enzyme composed of 14 subunits. The complex is composed of a catalytic core of 3 subunits MT-CO1, MT-CO2 and MT-CO3, encoded in the mitochondrial DNA, and 11 supernumerary subunits COX4I, COX5A, COX5B, COX6A, COX6B, COX6C, COX7A, COX7B, COX7C, COX8 and NDUFA4, which are encoded in the nuclear genome. The complex exists as a monomer or a dimer and forms supercomplexes (SCs) in the inner mitochondrial membrane with NADH-ubiquinone oxidoreductase (complex I, CI) and ubiquinol-cytochrome c oxidoreductase (cytochrome b-c1 complex, complex III, CIII), resulting in different assemblies (supercomplex SCI(1)III(2)IV(1) and megacomplex MCI(2)III(2)IV(2)). Post-translationally, in response to mitochondrial stress, the precursor protein is ubiquitinated by the SIFI complex in the cytoplasm before mitochondrial import, leading to its degradation. Within the SIFI complex, UBR4 initiates ubiquitin chain that are further elongated or branched by KCMF1.

Its subcellular location is the mitochondrion inner membrane. The protein operates within energy metabolism; oxidative phosphorylation. In terms of biological role, component of the cytochrome c oxidase, the last enzyme in the mitochondrial electron transport chain which drives oxidative phosphorylation. The respiratory chain contains 3 multisubunit complexes succinate dehydrogenase (complex II, CII), ubiquinol-cytochrome c oxidoreductase (cytochrome b-c1 complex, complex III, CIII) and cytochrome c oxidase (complex IV, CIV), that cooperate to transfer electrons derived from NADH and succinate to molecular oxygen, creating an electrochemical gradient over the inner membrane that drives transmembrane transport and the ATP synthase. Cytochrome c oxidase is the component of the respiratory chain that catalyzes the reduction of oxygen to water. Electrons originating from reduced cytochrome c in the intermembrane space (IMS) are transferred via the dinuclear copper A center (CU(A)) of subunit 2 and heme A of subunit 1 to the active site in subunit 1, a binuclear center (BNC) formed by heme A3 and copper B (CU(B)). The BNC reduces molecular oxygen to 2 water molecules using 4 electrons from cytochrome c in the IMS and 4 protons from the mitochondrial matrix. This chain is Cytochrome c oxidase subunit 8A, mitochondrial (COX8A), found in Gorilla gorilla gorilla (Western lowland gorilla).